We begin with the raw amino-acid sequence, 934 residues long: Coiled-coil domain-containing protein 39 (934 aa).

Coiled coils occupy residues 17–133 (IPVA…DGLK), 164–512 (SQQD…HNDL), 540–615 (VDRS…SQIR), and 664–826 (VIKA…EQDI). The segment at 866-934 (LPTAKGPSSR…NIPKGKKLNK (69 aa)) is disordered. A compositionally biased stretch (low complexity) spans 873–892 (SSRSSSQSSLSSIRSLEDSI). Phosphoserine is present on residues Ser-887 and Ser-895. The span at 912–925 (RSDSSRSSSGSNSN) shows a compositional bias: low complexity.

The protein belongs to the CCDC39 family.

It localises to the cytoplasm. The protein resides in the cytoskeleton. Its subcellular location is the cilium axoneme. In terms of biological role, required for assembly of dynein regulatory complex (DRC) and inner dynein arm (IDA) complexes, which are responsible for ciliary beat regulation, thereby playing a central role in motility in cilia and flagella. Probably acts together with CCDC40 to form a molecular ruler that determines the 96 nanometer (nm) repeat length and arrangements of components in cilia and flagella. Not required for outer dynein arm complexes assembly. This chain is Coiled-coil domain-containing protein 39 (Ccdc39), found in Rattus norvegicus (Rat).